A 203-amino-acid polypeptide reads, in one-letter code: MIGQLSGKVDSQGDDYVIIDVNGVGYLVYASGKTLGKLAEGEFYKLFIETHVREEHIHLYGFLTLEEKIFFNLLQSVNGIGTRMALFILSSLTPSDIQIAVNNEDKNIFKAISGVGAKLAERIVLELKGKVAKISSGSAIIKESLNIKNITPVASNEVIKALVNLGFSRFEAQNAVQGIITQNPEISIDELIKTALKNRNSNF.

Positions 1–63 (MIGQLSGKVD…EEHIHLYGFL (63 aa)) are domain I. Residues 64-142 (TLEEKIFFNL…KISSGSAIIK (79 aa)) form a domain II region. The segment at 143 to 149 (ESLNIKN) is flexible linker. Residues 150–203 (ITPVASNEVIKALVNLGFSRFEAQNAVQGIITQNPEISIDELIKTALKNRNSNF) form a domain III region.

It belongs to the RuvA family. Homotetramer. Forms an RuvA(8)-RuvB(12)-Holliday junction (HJ) complex. HJ DNA is sandwiched between 2 RuvA tetramers; dsDNA enters through RuvA and exits via RuvB. An RuvB hexamer assembles on each DNA strand where it exits the tetramer. Each RuvB hexamer is contacted by two RuvA subunits (via domain III) on 2 adjacent RuvB subunits; this complex drives branch migration. In the full resolvosome a probable DNA-RuvA(4)-RuvB(12)-RuvC(2) complex forms which resolves the HJ.

The protein localises to the cytoplasm. The RuvA-RuvB-RuvC complex processes Holliday junction (HJ) DNA during genetic recombination and DNA repair, while the RuvA-RuvB complex plays an important role in the rescue of blocked DNA replication forks via replication fork reversal (RFR). RuvA specifically binds to HJ cruciform DNA, conferring on it an open structure. The RuvB hexamer acts as an ATP-dependent pump, pulling dsDNA into and through the RuvAB complex. HJ branch migration allows RuvC to scan DNA until it finds its consensus sequence, where it cleaves and resolves the cruciform DNA. In Rickettsia conorii (strain ATCC VR-613 / Malish 7), this protein is Holliday junction branch migration complex subunit RuvA.